Reading from the N-terminus, the 360-residue chain is Phospho-N-acetylmuramoyl-pentapeptide-transferase (360 aa).

10 helical membrane-spanning segments follow: residues 21–41 (YLTL…FIVG), 70–90 (GTPT…TLLW), 97–117 (YVWA…VDDY), 134–154 (YLWQ…TASS), 168–188 (VVLN…VGSS), 199–219 (GLAI…AYAS), 236–256 (AGEL…FLWF), 263–283 (VFMG…VAVL), 288–308 (IVLM…MLQV), and 338–358 (VIVR…ATLK).

This sequence belongs to the glycosyltransferase 4 family. MraY subfamily. Requires Mg(2+) as cofactor.

It localises to the cell inner membrane. The catalysed reaction is UDP-N-acetyl-alpha-D-muramoyl-L-alanyl-gamma-D-glutamyl-meso-2,6-diaminopimeloyl-D-alanyl-D-alanine + di-trans,octa-cis-undecaprenyl phosphate = di-trans,octa-cis-undecaprenyl diphospho-N-acetyl-alpha-D-muramoyl-L-alanyl-D-glutamyl-meso-2,6-diaminopimeloyl-D-alanyl-D-alanine + UMP. Its pathway is cell wall biogenesis; peptidoglycan biosynthesis. In terms of biological role, catalyzes the initial step of the lipid cycle reactions in the biosynthesis of the cell wall peptidoglycan: transfers peptidoglycan precursor phospho-MurNAc-pentapeptide from UDP-MurNAc-pentapeptide onto the lipid carrier undecaprenyl phosphate, yielding undecaprenyl-pyrophosphoryl-MurNAc-pentapeptide, known as lipid I. The sequence is that of Phospho-N-acetylmuramoyl-pentapeptide-transferase from Methylococcus capsulatus (strain ATCC 33009 / NCIMB 11132 / Bath).